Here is a 378-residue protein sequence, read N- to C-terminus: Mannitol-1-phosphate 5-dehydrogenase (378 aa).

4–15 (SVHFGAGNIGRG) contributes to the NAD(+) binding site.

The protein belongs to the mannitol dehydrogenase family.

It catalyses the reaction D-mannitol 1-phosphate + NAD(+) = beta-D-fructose 6-phosphate + NADH + H(+). The protein is Mannitol-1-phosphate 5-dehydrogenase of Streptococcus pneumoniae (strain Hungary19A-6).